Consider the following 543-residue polypeptide: Protein GPR108 (543 aa).

Positions 1–32 (MAVSERRGLGRGSPAEWGQRLLLVLLLGGCSG) are cleaved as a signal peptide. N-linked (GlcNAc...) asparagine glycosylation is found at Asn-57 and Asn-109. The segment at 149 to 186 (SKPGLPKPQATVPRKVDGGGTSAASKPKSTPAVIQGPS) is disordered. 3 N-linked (GlcNAc...) asparagine glycosylation sites follow: Asn-200, Asn-204, and Asn-228. 7 helical membrane-spanning segments follow: residues 263-283 (LYMV…SILC), 292-312 (IHWL…FHSI), 336-356 (LLKG…WAFI), 367-387 (VFGI…IIES), 401-421 (ILFL…VWSI), 449-469 (VMVI…QVAV), and 473-493 (WQWL…VLTG). An N-linked (GlcNAc...) asparagine glycan is attached at Asn-534.

Belongs to the LU7TM family.

It is found in the golgi apparatus. Its subcellular location is the cis-Golgi network membrane. It localises to the trans-Golgi network membrane. The protein resides in the golgi apparatus membrane. Its function is as follows. May play a role in intracellular immune modulation by activating NF-kappaB response and attenuating Toll-like-receptor response. (Microbial infection) Plays an essential function in adeno-associated virus (AAV) transduction across multiple serotypes except AAV5. May play a critical role in mediating the endosomal virus escape or in the AAV virions trafficking from endosomes to the nucleus. The sequence is that of Protein GPR108 from Homo sapiens (Human).